Reading from the N-terminus, the 366-residue chain is 3-dehydroquinate synthase (366 aa).

NAD(+) is bound by residues 107-111 (GVIGD), 131-132 (TT), Lys-144, and Lys-153. 3 residues coordinate Zn(2+): Glu-186, His-251, and His-268.

The protein belongs to the sugar phosphate cyclases superfamily. Dehydroquinate synthase family. It depends on Co(2+) as a cofactor. The cofactor is Zn(2+). NAD(+) serves as cofactor.

The protein resides in the cytoplasm. It catalyses the reaction 7-phospho-2-dehydro-3-deoxy-D-arabino-heptonate = 3-dehydroquinate + phosphate. Its pathway is metabolic intermediate biosynthesis; chorismate biosynthesis; chorismate from D-erythrose 4-phosphate and phosphoenolpyruvate: step 2/7. Functionally, catalyzes the conversion of 3-deoxy-D-arabino-heptulosonate 7-phosphate (DAHP) to dehydroquinate (DHQ). This chain is 3-dehydroquinate synthase, found in Microcystis aeruginosa (strain NIES-843 / IAM M-2473).